The sequence spans 177 residues: Large ribosomal subunit protein uL6 (177 aa).

The protein belongs to the universal ribosomal protein uL6 family. In terms of assembly, part of the 50S ribosomal subunit.

This protein binds to the 23S rRNA, and is important in its secondary structure. It is located near the subunit interface in the base of the L7/L12 stalk, and near the tRNA binding site of the peptidyltransferase center. This chain is Large ribosomal subunit protein uL6, found in Rickettsia massiliae (strain Mtu5).